The primary structure comprises 967 residues: Translation initiation factor IF-2 (967 aa).

2 disordered regions span residues 201 to 320 (KPIV…PGFV) and 349 to 382 (LQGK…ELEA). The segment covering 233–248 (TGPTFSGQTIDLSQFN) has biased composition (polar residues). Low complexity predominate over residues 256-272 (PNKGGAKPAGAGNNNNN). Over residues 354–363 (NKSKAAKYRR) the composition is skewed to basic residues. Positions 364–382 (DKRDTHRQKSDDEQRELEA) are enriched in basic and acidic residues. A tr-type G domain is found at 465-635 (HRAPIVTVMG…LLEAEVLDLK (171 aa)). Residues 474 to 481 (GHVDHGKT) form a G1 region. 474 to 481 (GHVDHGKT) is a GTP binding site. A G2 region spans residues 499 to 503 (GITQH). The G3 stretch occupies residues 521-524 (DTPG). GTP contacts are provided by residues 521 to 525 (DTPGH) and 575 to 578 (NKVD). Residues 575–578 (NKVD) form a G4 region. The G5 stretch occupies residues 611–613 (SAK).

It belongs to the TRAFAC class translation factor GTPase superfamily. Classic translation factor GTPase family. IF-2 subfamily.

The protein localises to the cytoplasm. Functionally, one of the essential components for the initiation of protein synthesis. Protects formylmethionyl-tRNA from spontaneous hydrolysis and promotes its binding to the 30S ribosomal subunits. Also involved in the hydrolysis of GTP during the formation of the 70S ribosomal complex. The protein is Translation initiation factor IF-2 of Flavobacterium psychrophilum (strain ATCC 49511 / DSM 21280 / CIP 103535 / JIP02/86).